A 229-amino-acid chain; its full sequence is Large ribosomal subunit protein uL1 (229 aa).

Part of the 50S ribosomal subunit.

In terms of biological role, binds directly to 23S rRNA. The L1 stalk is quite mobile in the ribosome, and is involved in E site tRNA release. Its function is as follows. Protein L1 is also a translational repressor protein, it controls the translation of the L11 operon by binding to its mRNA. This chain is Large ribosomal subunit protein uL1, found in Rhodopseudomonas palustris (strain ATCC BAA-98 / CGA009).